We begin with the raw amino-acid sequence, 393 residues long: Short chain dehydrogenase sirQ (393 aa).

Leu54 serves as a coordination point for NADP(+). Residue Ser233 is the Proton donor of the active site. Lys259 (lowers pKa of active site Tyr) is an active-site residue. Ala286 provides a ligand contact to NADP(+).

This sequence belongs to the short-chain dehydrogenases/reductases (SDR) family. Highly divergent.

Its pathway is mycotoxin biosynthesis. Its function is as follows. Short chain dehydrogenase; part of the gene cluster that mediates the biosynthesis of sirodesmin PL, an epipolythiodioxopiperazine (ETP) characterized by a disulfide bridged cyclic dipeptide and that acts as a phytotoxin which is involved in the blackleg didease of canola. SirD catalyzes the O-prenylation of L-tyrosine (L-Tyr) in the presence of dimethylallyl diphosphate (DMAPP) to yield 4-O-dimethylallyl-L-Tyr, and therefore represents probably the first pathway-specific enzyme in the biosynthesis of sirodesmin PL. 4-O-dimethylallyl-L-Tyr, then undergoes condensation with L-Ser in a reaction catalyzed by the non-ribosomal peptide synthase sirP to form the diketopiperazine (DKP) backbone. Further bishydroxylation of the DKP performed by the cytochrome P450 monooxygenase sirC leads to the production of the intermediate phomamide. This step is essential to form the reactive thiol group required for toxicity of sirodesmin PL. The next steps of sirodesmin biosynthesis are not well understood yet, but some predictions could be made from intermediate compounds identification. Phomamide is converted into phomalizarine via oxidation, probably by sirT. Further oxidation, methylation (by sirM or sirN) and reduction steps convert phomalizarine to deacetyl sirodesmin. Finally, acetyltransferase sirH probably acetylates deacetyl sirodesmin to produce sirodesmin PL. The chain is Short chain dehydrogenase sirQ from Leptosphaeria maculans (Blackleg fungus).